Consider the following 142-residue polypeptide: Large ribosomal subunit protein uL13 (142 aa).

Belongs to the universal ribosomal protein uL13 family. As to quaternary structure, part of the 50S ribosomal subunit.

In terms of biological role, this protein is one of the early assembly proteins of the 50S ribosomal subunit, although it is not seen to bind rRNA by itself. It is important during the early stages of 50S assembly. The protein is Large ribosomal subunit protein uL13 of Pseudomonas fluorescens (strain ATCC BAA-477 / NRRL B-23932 / Pf-5).